A 557-amino-acid polypeptide reads, in one-letter code: Dihydroxy-acid dehydratase 1 (557 aa).

Residue cysteine 50 coordinates [2Fe-2S] cluster. Aspartate 82 serves as a coordination point for Mg(2+). Cysteine 123 provides a ligand contact to [2Fe-2S] cluster. Mg(2+) is bound by residues aspartate 124 and lysine 125. Position 125 is an N6-carboxylysine (lysine 125). [2Fe-2S] cluster is bound at residue cysteine 195. Position 447 (glutamate 447) interacts with Mg(2+). Serine 473 functions as the Proton acceptor in the catalytic mechanism.

The protein belongs to the IlvD/Edd family. As to quaternary structure, homodimer. Requires [2Fe-2S] cluster as cofactor. Mg(2+) serves as cofactor.

It catalyses the reaction (2R)-2,3-dihydroxy-3-methylbutanoate = 3-methyl-2-oxobutanoate + H2O. It carries out the reaction (2R,3R)-2,3-dihydroxy-3-methylpentanoate = (S)-3-methyl-2-oxopentanoate + H2O. The protein operates within amino-acid biosynthesis; L-isoleucine biosynthesis; L-isoleucine from 2-oxobutanoate: step 3/4. Its pathway is amino-acid biosynthesis; L-valine biosynthesis; L-valine from pyruvate: step 3/4. Functionally, functions in the biosynthesis of branched-chain amino acids. Catalyzes the dehydration of (2R,3R)-2,3-dihydroxy-3-methylpentanoate (2,3-dihydroxy-3-methylvalerate) into 2-oxo-3-methylpentanoate (2-oxo-3-methylvalerate) and of (2R)-2,3-dihydroxy-3-methylbutanoate (2,3-dihydroxyisovalerate) into 2-oxo-3-methylbutanoate (2-oxoisovalerate), the penultimate precursor to L-isoleucine and L-valine, respectively. In Cupriavidus pinatubonensis (strain JMP 134 / LMG 1197) (Cupriavidus necator (strain JMP 134)), this protein is Dihydroxy-acid dehydratase 1.